Consider the following 144-residue polypeptide: Nucleoside diphosphate kinase (144 aa).

ATP contacts are provided by lysine 11, phenylalanine 59, arginine 87, threonine 93, arginine 104, and asparagine 114. The Pros-phosphohistidine intermediate role is filled by histidine 117.

This sequence belongs to the NDK family. In terms of assembly, homotetramer. Mg(2+) serves as cofactor.

The protein localises to the cytoplasm. It catalyses the reaction a 2'-deoxyribonucleoside 5'-diphosphate + ATP = a 2'-deoxyribonucleoside 5'-triphosphate + ADP. The catalysed reaction is a ribonucleoside 5'-diphosphate + ATP = a ribonucleoside 5'-triphosphate + ADP. Functionally, major role in the synthesis of nucleoside triphosphates other than ATP. The ATP gamma phosphate is transferred to the NDP beta phosphate via a ping-pong mechanism, using a phosphorylated active-site intermediate. This chain is Nucleoside diphosphate kinase, found in Sorangium cellulosum (strain So ce56) (Polyangium cellulosum (strain So ce56)).